Reading from the N-terminus, the 327-residue chain is Probable cell division protein WhiA (327 aa).

Residues 275 to 308 (SLEELGRLADPVMTKDAVAGRIRRLLSMADRKAK) constitute a DNA-binding region (H-T-H motif). Residues 307–327 (AKTEGIPDTESAVTPELLEEA) are disordered.

This sequence belongs to the WhiA family.

Involved in cell division and chromosome segregation. This Mycobacteroides abscessus (strain ATCC 19977 / DSM 44196 / CCUG 20993 / CIP 104536 / JCM 13569 / NCTC 13031 / TMC 1543 / L948) (Mycobacterium abscessus) protein is Probable cell division protein WhiA.